A 474-amino-acid chain; its full sequence is Glutamate--tRNA ligase (474 aa).

The 'HIGH' region motif lies at 11–21; it reads PSPTGFLHIGG. The 'KMSKS' region signature appears at 240–244; sequence KLSKR. ATP is bound at residue K243.

Belongs to the class-I aminoacyl-tRNA synthetase family. Glutamate--tRNA ligase type 1 subfamily. As to quaternary structure, monomer.

It localises to the cytoplasm. It catalyses the reaction tRNA(Glu) + L-glutamate + ATP = L-glutamyl-tRNA(Glu) + AMP + diphosphate. Functionally, catalyzes the attachment of glutamate to tRNA(Glu) in a two-step reaction: glutamate is first activated by ATP to form Glu-AMP and then transferred to the acceptor end of tRNA(Glu). This Nitrobacter winogradskyi (strain ATCC 25391 / DSM 10237 / CIP 104748 / NCIMB 11846 / Nb-255) protein is Glutamate--tRNA ligase.